Here is a 200-residue protein sequence, read N- to C-terminus: N-(5'-phosphoribosyl)anthranilate isomerase (200 aa).

The protein belongs to the TrpF family.

It carries out the reaction N-(5-phospho-beta-D-ribosyl)anthranilate = 1-(2-carboxyphenylamino)-1-deoxy-D-ribulose 5-phosphate. Its pathway is amino-acid biosynthesis; L-tryptophan biosynthesis; L-tryptophan from chorismate: step 3/5. This chain is N-(5'-phosphoribosyl)anthranilate isomerase, found in Endomicrobium trichonymphae.